The sequence spans 155 residues: E3 ubiquitin-protein ligase RHA2A (155 aa).

The RING-type; atypical zinc-finger motif lies at 86 to 128 (CVVCLSKLKEGEEVRKLECRHVFHKKCLEGWLHQFNFTCPLCR).

As to quaternary structure, interacts with NAC019 and NAC055. Expressed in stems, flowers, cauline leaves, rosettes, siliques, seeds and roots.

It is found in the cytoplasm. The protein resides in the nucleus. The enzyme catalyses S-ubiquitinyl-[E2 ubiquitin-conjugating enzyme]-L-cysteine + [acceptor protein]-L-lysine = [E2 ubiquitin-conjugating enzyme]-L-cysteine + N(6)-ubiquitinyl-[acceptor protein]-L-lysine.. Its pathway is protein modification; protein ubiquitination. E3 ubiquitin-protein ligase involved in the positive regulation of abscisic acid (ABA) signaling and responses to salt and osmotic stresses during seed germination and early seedling development. Acts additively with RHA2B in regulating ABA signaling and drought response. Possesses E3 ubiquitin ligase activity in vitro. The chain is E3 ubiquitin-protein ligase RHA2A from Arabidopsis thaliana (Mouse-ear cress).